The primary structure comprises 161 residues: MQVFIMRHGDAALDAASDSVRPLTTNGCDESRLMANWLKGQKVEIERVLVSPFLRAEQTLEEVGDCLNLPSSAEVLPELTPCGDVGLVSAYLQALTNEGVASVLVISHLPLVGYLVAELCPGETPPMFTTSAIASVTLDESGNGTFNWQMSPCNLKMAKAI.

Belongs to the SixA phosphatase family.

In terms of biological role, exhibits phosphohistidine phosphatase activity towards the HPt domain of the ArcB sensor involved in the multistep His-Asp phosphorelay. This chain is Phosphohistidine phosphatase SixA (sixA), found in Escherichia coli (strain K12).